Here is a 576-residue protein sequence, read N- to C-terminus: Glutamine--tRNA ligase (576 aa).

A 'HIGH' region motif is present at residues 47-57; the sequence is PEPNGYLHIGH. ATP contacts are provided by residues 48–50 and 54–60; these read EPN and HIGHAKS. Aspartate 80 and tyrosine 229 together coordinate L-glutamine. Residues threonine 248 and 283–284 each bind ATP; that span reads RL. A 'KMSKS' region motif is present at residues 290 to 294; the sequence is ITSKR.

Belongs to the class-I aminoacyl-tRNA synthetase family. As to quaternary structure, monomer.

The protein localises to the cytoplasm. It catalyses the reaction tRNA(Gln) + L-glutamine + ATP = L-glutaminyl-tRNA(Gln) + AMP + diphosphate. This is Glutamine--tRNA ligase from Ralstonia pickettii (strain 12J).